The following is a 619-amino-acid chain: Dihydroxy-acid dehydratase (619 aa).

Aspartate 81 is a binding site for Mg(2+). Cysteine 122 contributes to the [2Fe-2S] cluster binding site. Positions 123 and 124 each coordinate Mg(2+). An N6-carboxylysine modification is found at lysine 124. Cysteine 195 serves as a coordination point for [2Fe-2S] cluster. Glutamate 491 is a Mg(2+) binding site. Catalysis depends on serine 517, which acts as the Proton acceptor.

The protein belongs to the IlvD/Edd family. As to quaternary structure, homodimer. Requires [2Fe-2S] cluster as cofactor. The cofactor is Mg(2+).

It catalyses the reaction (2R)-2,3-dihydroxy-3-methylbutanoate = 3-methyl-2-oxobutanoate + H2O. The enzyme catalyses (2R,3R)-2,3-dihydroxy-3-methylpentanoate = (S)-3-methyl-2-oxopentanoate + H2O. It participates in amino-acid biosynthesis; L-isoleucine biosynthesis; L-isoleucine from 2-oxobutanoate: step 3/4. The protein operates within amino-acid biosynthesis; L-valine biosynthesis; L-valine from pyruvate: step 3/4. Its function is as follows. Functions in the biosynthesis of branched-chain amino acids. Catalyzes the dehydration of (2R,3R)-2,3-dihydroxy-3-methylpentanoate (2,3-dihydroxy-3-methylvalerate) into 2-oxo-3-methylpentanoate (2-oxo-3-methylvalerate) and of (2R)-2,3-dihydroxy-3-methylbutanoate (2,3-dihydroxyisovalerate) into 2-oxo-3-methylbutanoate (2-oxoisovalerate), the penultimate precursor to L-isoleucine and L-valine, respectively. This is Dihydroxy-acid dehydratase from Rhodopseudomonas palustris (strain HaA2).